A 64-amino-acid chain; its full sequence is Large ribosomal subunit protein bL35 (64 aa).

Basic residues-rich tracts occupy residues 1-15 and 23-43; these read MPKQKSHSGASKRFR and VRQKANRRHLLEHKSSRRTRR. The disordered stretch occupies residues 1–64; it reads MPKQKSHSGA…AGRIKRLLAR (64 aa).

Belongs to the bacterial ribosomal protein bL35 family.

This chain is Large ribosomal subunit protein bL35, found in Frankia alni (strain DSM 45986 / CECT 9034 / ACN14a).